The chain runs to 440 residues: N-succinylarginine dihydrolase (440 aa).

Substrate contacts are provided by residues 17-26, Asn108, and 135-136; these read GGLSPGNLAS and HR. The interval 17 to 37 is disordered; it reads GGLSPGNLASQSHVGEPSHPR. Residue Glu172 is part of the active site. Residue Arg210 participates in substrate binding. His246 is a catalytic residue. Residues Asp248 and Asn358 each coordinate substrate. The active-site Nucleophile is the Cys364.

This sequence belongs to the succinylarginine dihydrolase family. Homodimer.

It catalyses the reaction N(2)-succinyl-L-arginine + 2 H2O + 2 H(+) = N(2)-succinyl-L-ornithine + 2 NH4(+) + CO2. It functions in the pathway amino-acid degradation; L-arginine degradation via AST pathway; L-glutamate and succinate from L-arginine: step 2/5. In terms of biological role, catalyzes the hydrolysis of N(2)-succinylarginine into N(2)-succinylornithine, ammonia and CO(2). This Myxococcus xanthus (strain DK1622) protein is N-succinylarginine dihydrolase.